We begin with the raw amino-acid sequence, 210 residues long: MTQPIGLDGLPEKASSSGTTYLDGQLLIAMPVMQDERFARSVIYVCAHSPDGAMGIIVNRPAGSIDFPQLLRQLDIVADGVPIQLPDDGETVKILRGGPVETSRGFVLHSSDYAIEDATLPIDNGICLTATLDILKAIAQGTGPRRAVLALGYAGWAPGQLESEIQHNGWLHCPADPDIVFGRDMDDKYQRALQKIGIDLGMLSNSAGHA.

This sequence belongs to the UPF0301 (AlgH) family.

In Afipia carboxidovorans (strain ATCC 49405 / DSM 1227 / KCTC 32145 / OM5) (Oligotropha carboxidovorans), this protein is UPF0301 protein OCAR_7326/OCA5_c07920.